Consider the following 345-residue polypeptide: Protein RecA (345 aa).

65–72 lines the ATP pocket; that stretch reads GPESSGKT.

This sequence belongs to the RecA family.

Its subcellular location is the cytoplasm. Can catalyze the hydrolysis of ATP in the presence of single-stranded DNA, the ATP-dependent uptake of single-stranded DNA by duplex DNA, and the ATP-dependent hybridization of homologous single-stranded DNAs. It interacts with LexA causing its activation and leading to its autocatalytic cleavage. This Hahella chejuensis (strain KCTC 2396) protein is Protein RecA.